The following is a 472-amino-acid chain: MQENISVTDSYSTGNAAQAMLEKLLQIYDVKTLVAQLNGVGENHWSAAILKRALANDSAWHRLSEKEFAHLQTLLPKPPAHHPHYAFRFIDLFAGIGGIRRGFESIGGQCVFTSEWNKHAVRTYKANHYCDPATHHFNEDIRDITLSHKEGVSDEAAAEHIRQHIPEHDVLLAGFPCQPFSLAGVSKKNSLGRAHGFACDTQGTLFFDVVRIIDARRPAMFVLENVKNLKSHDQGKTFRIIMQTLDELGYDVADAEDNGPDDPKIIDGKHFLPQHRERIVLVGFRRDLNLKADFTLRDISECFPAQRVTLAQLLDPMVEAKYILTPVLWKYLYRYAKKHQARGNGFGYGMVYPNNPQSVTRTLSARYYKDGAEILIDRGWDMATGEKDFDDPLNQQHRPRRLTPRECARLMGFEAPGEAKFRIPVSDTQAYRQFGNSVVVPVFAAVAKLLEPKIKQAVALRQQEAQHGRRSR.

An SAM-dependent MTase C5-type domain is found at 87–457 (FRFIDLFAGI…KLLEPKIKQA (371 aa)). The active site involves cysteine 177.

The protein belongs to the class I-like SAM-binding methyltransferase superfamily. C5-methyltransferase family.

The catalysed reaction is a 2'-deoxycytidine in DNA + S-adenosyl-L-methionine = a 5-methyl-2'-deoxycytidine in DNA + S-adenosyl-L-homocysteine + H(+). This methylase recognizes the double-stranded sequence 5'-CCWGG-3', methylates C-2 on both strands. The polypeptide is DNA-cytosine methyltransferase (dcm) (Escherichia coli O157:H7).